Here is a 259-residue protein sequence, read N- to C-terminus: Nuclear egress protein 1 (259 aa).

The CCCH-type zinc-finger motif lies at 80-184 (CLDLSPYANE…YVVFQTRTLH (105 aa)).

The protein belongs to the herpesviridae NEC1 protein family. In terms of assembly, forms a heterohexameric complex with NEC2. Interacts with capsid vertex specific component 2/CVC2; this interaction directs the capsid to the host inner nuclear membrane to initiate budding. Phosphorylated at serine residues in the N-terminus. This phosphorylation regulates the localization within the inner nuclear membrane.

Its subcellular location is the host nucleus inner membrane. Its function is as follows. Plays an essential role in virion nuclear egress, the first step of virion release from infected cell. Within the host nucleus, NEC1 interacts with the newly formed capsid through the vertexes and directs it to the inner nuclear membrane by associating with NEC2. Induces the budding of the capsid at the inner nuclear membrane as well as its envelopment into the perinuclear space. There, the NEC1/NEC2 complex promotes the fusion of the enveloped capsid with the outer nuclear membrane and the subsequent release of the viral capsid into the cytoplasm where it will reach the secondary budding sites in the host Golgi or trans-Golgi network. This is Nuclear egress protein 1 from Homo sapiens (Human).